The primary structure comprises 44 residues: uncharacterized protein (44 aa).

This is an uncharacterized protein from Saccharomyces cerevisiae (strain ATCC 204508 / S288c) (Baker's yeast).